Reading from the N-terminus, the 195-residue chain is Keratin-associated protein 4-3 (195 aa).

A run of 28 repeats spans residues 34–38 (CCRTT), 39–43 (CCRPS), 44–48 (CCISS), 49–53 (CCRPS), 54–58 (CCISS), 59–63 (CCKPS), 64–68 (CCRTT), 69–73 (CCRPS), 74–78 (CCISS), 79–83 (CCRPS), 84–88 (CCISS), 89–93 (CCKPS), 94–98 (CCRTT), 99–103 (CCRPS), 104–108 (CCISS), 109–113 (CCRPS), 114–118 (CCISS), 119–123 (CCKPS), 124–128 (CCQTT), 129–133 (CCRPS), 134–138 (CCISS), 144–148 (CCQPS), 149–153 (CCRPA), 154–158 (CCISS), 159–163 (CCHPS), 164–168 (CCVSS), 179–183 (CCRTT), and 189–193 (CCGSS). The 29 X 5 AA repeats of C-C-[GIKRQVH]-[SPT]-[STA] stretch occupies residues 34-193 (CCRTTCCRPS…CFHPICCGSS (160 aa)).

It belongs to the KRTAP type 4 family. As to quaternary structure, interacts with hair keratins. As to expression, expressed specifically in the middle/uper portions of the hair cortex. Not detected in the hair matrix or cuticle.

In terms of biological role, in the hair cortex, hair keratin intermediate filaments are embedded in an interfilamentous matrix, consisting of hair keratin-associated proteins (KRTAP), which are essential for the formation of a rigid and resistant hair shaft through their extensive disulfide bond cross-linking with abundant cysteine residues of hair keratins. The matrix proteins include the high-sulfur and high-glycine-tyrosine keratins. In Homo sapiens (Human), this protein is Keratin-associated protein 4-3 (KRTAP4-3).